Consider the following 484-residue polypeptide: Putative tyramine receptor 2 (484 aa).

Residues 1–54 (MVRVELQAASLMNGSSAAEEPQDALVGGDACGGRRPPSVLGVRLAVPEWEVAVT) are Extracellular-facing. Asparagine 13 is a glycosylation site (N-linked (GlcNAc...) asparagine). A helical transmembrane segment spans residues 55 to 77 (AVSLSLIILITIVGNVLVVLSVF). Residues 78-87 (TYKPLRIVQN) lie on the Cytoplasmic side of the membrane. A helical membrane pass occupies residues 88-109 (FFIVSLAVADLTVAVLVMPFNV). Topologically, residues 110–126 (AYSLIQRWVFGIVVCKM) are extracellular. Cysteine 124 and cysteine 203 form a disulfide bridge. A helical transmembrane segment spans residues 127–147 (WLTCDVLCCTASILNLCAIAL). Residues 148-167 (DRYWAITDPINYAQKRTLRR) are Cytoplasmic-facing. Residues 168-190 (VLAMIAGVWLLSGVISSPPLIGW) form a helical membrane-spanning segment. Over 191–215 (NDWPMEFNDTTPCQLTEEQGYVIYS) the chain is Extracellular. Residue asparagine 198 is glycosylated (N-linked (GlcNAc...) asparagine). Residues 216 to 237 (SLGSFFIPLFIMTIVYVEIFIA) traverse the membrane as a helical segment. At 238–411 (TKRRLRERAK…LSKERRAART (174 aa)) the chain is on the cytoplasmic side. Residues 253 to 280 (SAMKQQMAAQAVPSSVPSHDQESVSSET) show a composition bias toward polar residues. Disordered stretches follow at residues 253–322 (SAMK…PAMV) and 350–383 (TTTTTTTTTTTAVTDSPRSRTASQKGSTAPPTPV). Over residues 295-306 (EKRRKTKKKSKK) the composition is skewed to basic residues. The segment covering 350–360 (TTTTTTTTTTT) has biased composition (low complexity). The span at 361–378 (AVTDSPRSRTASQKGSTA) shows a compositional bias: polar residues. Residues 412 to 433 (LGIIMGVFVVCWLPFFLMYVIV) traverse the membrane as a helical segment. The Extracellular segment spans residues 434–448 (PFCNPSCKPSPKLVN). Residues 449-470 (FITWLGYINSALNPIIYTIFNL) form a helical membrane-spanning segment. The Cytoplasmic segment spans residues 471–484 (DFRRAFKKLLHFKT).

The protein belongs to the G-protein coupled receptor 1 family.

The protein localises to the cell membrane. Functionally, G-protein coupled receptor for tyramine, a known neurotransmitter and neuromodulator and direct precursor of octopamine. This Locusta migratoria (Migratory locust) protein is Putative tyramine receptor 2 (GCR2).